A 189-amino-acid chain; its full sequence is dTTP/UTP pyrophosphatase (189 aa).

Aspartate 70 acts as the Proton acceptor in catalysis. An intrachain disulfide couples cysteine 74 to cysteine 79.

The protein belongs to the Maf family. YhdE subfamily. In terms of assembly, homodimer. A divalent metal cation serves as cofactor.

It localises to the cytoplasm. The enzyme catalyses dTTP + H2O = dTMP + diphosphate + H(+). The catalysed reaction is UTP + H2O = UMP + diphosphate + H(+). It catalyses the reaction CTP + H2O = CMP + diphosphate + H(+). It carries out the reaction psi-UTP + H2O = psi-UMP + diphosphate + H(+). The enzyme catalyses 5-methyl-CTP + H2O = 5-methyl-CMP + diphosphate + H(+). The catalysed reaction is 5-methyl-UTP + H2O = 5-methyl-UMP + diphosphate + H(+). Nucleoside triphosphate pyrophosphatase that hydrolyzes dTTP and UTP. Can also hydrolyze CTP and the modified nucleotides pseudo-UTP, 5-methyl-CTP (m(5)CTP) and 5-methyl-UTP (m(5)UTP). May have a dual role in cell division arrest and in preventing the incorporation of modified nucleotides into cellular nucleic acids. The protein is dTTP/UTP pyrophosphatase of Bacillus subtilis (strain 168).